Reading from the N-terminus, the 177-residue chain is Large ribosomal subunit protein uL6 (177 aa).

It belongs to the universal ribosomal protein uL6 family. As to quaternary structure, part of the 50S ribosomal subunit.

Functionally, this protein binds to the 23S rRNA, and is important in its secondary structure. It is located near the subunit interface in the base of the L7/L12 stalk, and near the tRNA binding site of the peptidyltransferase center. This chain is Large ribosomal subunit protein uL6, found in Mannheimia succiniciproducens (strain KCTC 0769BP / MBEL55E).